The chain runs to 247 residues: Small ribosomal subunit protein eS6 (247 aa).

The interval 194–247 (ALKKKRVTKKREDHAEYTKLLAQRMKEAKERKMERKRSNSRSKGDSIRESTSKK) is disordered. Residues 217–247 (RMKEAKERKMERKRSNSRSKGDSIRESTSKK) show a composition bias toward basic and acidic residues.

It belongs to the eukaryotic ribosomal protein eS6 family. Post-translationally, ribosomal protein S6 is the major substrate of protein kinases in eukaryote ribosomes.

Functionally, component of the 40S small ribosomal subunit. Plays an important role in controlling cell growth and proliferation through the selective translation of particular classes of mRNA. In Aplysia californica (California sea hare), this protein is Small ribosomal subunit protein eS6 (RPS6).